We begin with the raw amino-acid sequence, 324 residues long: Putative divalent cation/proton antiporter TMEM165 (324 aa).

The first 33 residues, 1 to 33, serve as a signal peptide directing secretion; that stretch reads MAAAAPGNGRASAPRLLLLFLVPLLWAPAAVRA. At 34-89 the chain is on the lumenal side; sequence GPDEDLSHRNKEPPAPAQQLQPQPVAVQGPEPARVEKIFTPAAPVHTNKEDPATQT. The segment covering 35 to 45 has biased composition (basic and acidic residues); it reads PDEDLSHRNKE. The interval 35 to 59 is disordered; that stretch reads PDEDLSHRNKEPPAPAQQLQPQPVA. Over residues 50–59 the composition is skewed to low complexity; it reads AQQLQPQPVA. The chain crosses the membrane as a helical span at residues 90–110; that stretch reads NLGFIHAFVAAISVIIVSELG. Residues 111 to 126 lie on the Cytoplasmic side of the membrane; it reads DKTFFIAAIMAMRYNR. The chain crosses the membrane as a helical span at residues 127-147; the sequence is LTVLAGAMLALGLMTCLSVLF. The Lumenal portion of the chain corresponds to 148–151; the sequence is GYAT. Residues 152 to 172 traverse the membrane as a helical segment; the sequence is TVIPRVYTYYVSTVLFAIFGI. Residues 173–228 are Cytoplasmic-facing; sequence RMLREGLKMSPDEGQEELEEVQAELKKKDEEFQRTKLLNGPGDVETGTSITVPQKK. Residues 184–211 are a coiled coil; it reads DEGQEELEEVQAELKKKDEEFQRTKLLN. The helical transmembrane segment at 229 to 249 threads the bilayer; it reads WLHFISPIFVQALTLTFLAEW. The Lumenal portion of the chain corresponds to 250–267; that stretch reads GDRSQLTTIVLAAREDPY. The helical transmembrane segment at 268–288 threads the bilayer; it reads GVAVGGTVGHCLCTGLAVIGG. Residues 289 to 299 are Cytoplasmic-facing; that stretch reads RMIAQKISVRT. A helical membrane pass occupies residues 300–320; the sequence is VTIIGGIVFLAFAFSALFISP. The Lumenal segment spans residues 321 to 324; it reads DSGF.

The protein belongs to the GDT1 family. Ubiquitously expressed.

The protein localises to the golgi apparatus membrane. The catalysed reaction is Ca(2+)(in) + n H(+)(out) = Ca(2+)(out) + n H(+)(in). It carries out the reaction Mn(2+)(in) + n H(+)(out) = Mn(2+)(out) + n H(+)(in). Functionally, putative divalent cation:proton antiporter that exchanges calcium or manganese ions for protons across the Golgi membrane. Mediates the reversible transport of calcium or manganese to the Golgi lumen driven by the proton gradient and possibly the membrane potential generated by V-ATPase. Provides calcium or manganese cofactors to resident Golgi enzymes and contributes to the maintenance of an acidic luminal Golgi pH required for proper functioning of the secretory pathway. Promotes Ca(2+) storage within the Golgi lumen of the mammary epithelial cells to be then secreted into milk. The transport mechanism and stoichiometry remains to be elucidated. This Homo sapiens (Human) protein is Putative divalent cation/proton antiporter TMEM165.